Here is a 149-residue protein sequence, read N- to C-terminus: Transcriptional regulator MraZ (149 aa).

SpoVT-AbrB domains lie at 7–54 (KYVN…GISH) and 83–126 (AVQL…QPQN).

This sequence belongs to the MraZ family. As to quaternary structure, forms oligomers.

It localises to the cytoplasm. Its subcellular location is the nucleoid. The protein is Transcriptional regulator MraZ of Rickettsia rickettsii (strain Sheila Smith).